The chain runs to 78 residues: DNA-directed RNA polymerase subunit Rpo5 (78 aa).

Belongs to the archaeal Rpo5/eukaryotic RPB5 RNA polymerase subunit family. In terms of assembly, part of the RNA polymerase complex.

The protein localises to the cytoplasm. It catalyses the reaction RNA(n) + a ribonucleoside 5'-triphosphate = RNA(n+1) + diphosphate. Its function is as follows. DNA-dependent RNA polymerase (RNAP) catalyzes the transcription of DNA into RNA using the four ribonucleoside triphosphates as substrates. In Methanococcus maripaludis (strain C6 / ATCC BAA-1332), this protein is DNA-directed RNA polymerase subunit Rpo5.